The following is a 483-amino-acid chain: SWI/SNF-related matrix-associated actin-dependent regulator of chromatin subfamily D member 3 (483 aa).

Alanine 2 carries the post-translational modification N-acetylalanine. Residues 27-102 (RPGMPSGARM…ARSRSAKRRK (76 aa)) form a disordered region. Residues 78 to 88 (QSQAQGQGQPV) are compositionally biased toward low complexity. Position 178 is a phosphoserine (serine 178). Positions 258–335 (YQPPQFKLDP…PQRLTALLLP (78 aa)) constitute an SWIB/MDM2 domain.

It belongs to the SMARCD family. In terms of assembly, component of the multiprotein chromatin-remodeling complexes SWI/SNF: SWI/SNF-A (BAF), SWI/SNF-B (PBAF) and related complexes. The canonical complex contains a catalytic subunit (either SMARCA4/BRG1/BAF190A or SMARCA2/BRM/BAF190B) and at least SMARCE1, ACTL6A/BAF53, SMARCC1/BAF155, SMARCC2/BAF170, and SMARCB1/SNF5/BAF47. Other subunits specific to each of the complexes may also be present permitting several possible combinations developmentally and tissue specific. Component of the BAF complex, which includes at least actin (ACTB), ARID1A/BAF250A, ARID1B/BAF250B, SMARCA2/BRM, SMARCA4/BRG1/BAF190A, ACTL6A/BAF53, ACTL6B/BAF53B, SMARCE1/BAF57, SMARCC1/BAF155, SMARCC2/BAF170, SMARCB1/SNF5/INI1, and one or more SMARCD1/BAF60A, SMARCD2/BAF60B, or SMARCD3/BAF60C. In muscle cells, the BAF complex also contains DPF3. Component of neural progenitors-specific chromatin remodeling complex (npBAF complex) composed of at least, ARID1A/BAF250A or ARID1B/BAF250B, SMARCD1/BAF60A, SMARCD3/BAF60C, SMARCA2/BRM/BAF190B, SMARCA4/BRG1/BAF190A, SMARCB1/BAF47, SMARCC1/BAF155, SMARCE1/BAF57, SMARCC2/BAF170, PHF10/BAF45A, ACTL6A/BAF53A and actin. Component of neuron-specific chromatin remodeling complex (nBAF complex) composed of at least, ARID1A/BAF250A or ARID1B/BAF250B, SMARCD1/BAF60A, SMARCD3/BAF60C, SMARCA2/BRM/BAF190B, SMARCA4/BRG1/BAF190A, SMARCB1/BAF47, SMARCC1/BAF155, SMARCE1/BAF57, SMARCC2/BAF170, DPF1/BAF45B, DPF3/BAF45C, ACTL6B/BAF53B and actin. May be a component of the SWI/SNF-B (PBAF) chromatin remodeling complex, at least composed of SMARCA4/BRG1, SMARCB1/BAF47/SNF5, ACTL6A/BAF53A or ACTL6B/BAF53B, SMARCE1/BAF57, SMARCD1/BAF60A, SMARCD2/BAF60B, perhaps SMARCD3/BAF60C, SMARCC1/BAF155, SMARCC2/BAF170, PBRM1/BAF180, ARID2/BAF200 and actin. Component of SWI/SNF (GBAF) subcomplex, which includes at least BICRA or BICRAL (mutually exclusive), BRD9, SS18, SMARCA2/BRM, SMARCA4/BRG1/BAF190A, ACTL6A/BAF53, SMARCC1/BAF155, and SMARCD1/BAF60A. Interacts with SMARCA4/BRG1/BAF190A. The precise distribution of the related SMARCD1, SMARCD2 and SMARCD3 proteins among these and other SWI/SNF nucleosome-remodeling complexes is not fully known. May allow recruitment of SWI/SNF containing complexes specifically to promoters where these factors are located. Also interacts with several nuclear receptors including PPARG/NR1C3, RXRA/NR1F1, ESR1, NR5A1, NR5A2/LRH1 and other transcriptional activators including the HLH protein SREBF1/SREBP1 and the homeobox protein PBX1. Interacts with PRDM1/BLIMP1. In terms of tissue distribution, ubiquitously expressed.

It localises to the nucleus. Involved in transcriptional activation and repression of select genes by chromatin remodeling (alteration of DNA-nucleosome topology). Component of SWI/SNF chromatin remodeling complexes that carry out key enzymatic activities, changing chromatin structure by altering DNA-histone contacts within a nucleosome in an ATP-dependent manner. Stimulates nuclear receptor mediated transcription. Belongs to the neural progenitors-specific chromatin remodeling complex (npBAF complex) and the neuron-specific chromatin remodeling complex (nBAF complex). During neural development a switch from a stem/progenitor to a postmitotic chromatin remodeling mechanism occurs as neurons exit the cell cycle and become committed to their adult state. The transition from proliferating neural stem/progenitor cells to postmitotic neurons requires a switch in subunit composition of the npBAF and nBAF complexes. As neural progenitors exit mitosis and differentiate into neurons, npBAF complexes which contain ACTL6A/BAF53A and PHF10/BAF45A, are exchanged for homologous alternative ACTL6B/BAF53B and DPF1/BAF45B or DPF3/BAF45C subunits in neuron-specific complexes (nBAF). The npBAF complex is essential for the self-renewal/proliferative capacity of the multipotent neural stem cells. The nBAF complex along with CREST plays a role regulating the activity of genes essential for dendrite growth. This chain is SWI/SNF-related matrix-associated actin-dependent regulator of chromatin subfamily D member 3 (Smarcd3), found in Mus musculus (Mouse).